The following is a 306-amino-acid chain: D-alanine--D-alanine ligase (306 aa).

The 200-residue stretch at 101–300 folds into the ATP-grasp domain; that stretch reads KVVMAAAGIP…FGELVTWMVE (200 aa). 128–182 lines the ATP pocket; that stretch reads LPPPYVLKPNTGGSSVGVFIVKEDQPHPPQELFRADWTFGESLMAEPFIKGLELT. Aspartate 250, glutamate 267, and asparagine 269 together coordinate Mg(2+).

This sequence belongs to the D-alanine--D-alanine ligase family. It depends on Mg(2+) as a cofactor. Mn(2+) serves as cofactor.

The protein resides in the cytoplasm. The catalysed reaction is 2 D-alanine + ATP = D-alanyl-D-alanine + ADP + phosphate + H(+). It participates in cell wall biogenesis; peptidoglycan biosynthesis. Cell wall formation. In Azorhizobium caulinodans (strain ATCC 43989 / DSM 5975 / JCM 20966 / LMG 6465 / NBRC 14845 / NCIMB 13405 / ORS 571), this protein is D-alanine--D-alanine ligase.